The following is a 95-amino-acid chain: MSRDYKGKKIVIYPQYIDSSIPRSRGRRIPRNIAIPKPRIEEIIEAAEELGLNPKYEESAYPKHWWIKGRIVVDKVGSKLNTLKLIAQKIKDLRK.

Belongs to the SRP19 family. In terms of assembly, part of the signal recognition particle protein translocation system, which is composed of SRP and FtsY. Archaeal SRP consists of a 7S RNA molecule of 300 nucleotides and two protein subunits: SRP54 and SRP19.

It is found in the cytoplasm. In terms of biological role, involved in targeting and insertion of nascent membrane proteins into the cytoplasmic membrane. Binds directly to 7S RNA and mediates binding of the 54 kDa subunit of the SRP. The protein is Signal recognition particle 19 kDa protein of Staphylothermus marinus (strain ATCC 43588 / DSM 3639 / JCM 9404 / F1).